A 456-amino-acid chain; its full sequence is Cell cycle checkpoint control protein Rad9 (456 aa).

A Nuclear localization signal motif is present at residues 300–302; the sequence is KRK.

It belongs to the rad9 family. As to quaternary structure, component of the 9-1-1 checkpoint clamp complex consisting of Rad9 isoform A, Rad1 and Hus1-like; the interaction with Hus1-like is direct. Does not interact directly with Rad1; this interaction is probably mediated by Hus1-like. This complex probably also forms with Rad9 isoform B, however 9-1-1 complex containing Rad9 isoform A localizes to the nuclear periphery. Interacts with Brca2. As to expression, expressed in ovary.

Its subcellular location is the nucleus envelope. It localises to the nucleus. Component of the Rad9-Rad1-Hus1 (9-1-1) checkpoint clamp complex. In terms of biological role, targets the 9-1-1 complex to the nuclear periphery. Targeting to the nuclear periphery is disrupted in the presence of persistent double stranded break DNA damage, possibly as a function of the meiotic checkpoint. The protein is Cell cycle checkpoint control protein Rad9 of Drosophila melanogaster (Fruit fly).